We begin with the raw amino-acid sequence, 325 residues long: Hexaprenyl-diphosphate synthase large subunit ((2E,6E)-farnesyl-diphosphate specific) (325 aa).

Positions 45, 48, and 77 each coordinate isopentenyl diphosphate. The all-trans-hexaprenyl diphosphate site is built by aspartate 84, aspartate 88, and arginine 93. Aspartate 84 and aspartate 88 together coordinate Mg(2+). Isopentenyl diphosphate is bound at residue arginine 94. Residues lysine 170, threonine 171, and glutamine 208 each coordinate all-trans-hexaprenyl diphosphate.

The protein belongs to the FPP/GGPP synthase family. In terms of assembly, dimer of heterodimer or heterotetramer composed of a small (Hexs-a) and large (Hexs-B) subunit. It depends on Mg(2+) as a cofactor.

The catalysed reaction is 3 isopentenyl diphosphate + (2E,6E)-farnesyl diphosphate = all-trans-hexaprenyl diphosphate + 3 diphosphate. Functionally, catalyzes the condensation of three molecules of isopentenyl diphosphate with farnesyl diphosphate (FPP) to yield (all-E)-hexaprenyl diphosphate (HexPP; C30), the precursor of the prenyl side chain of menaquinone-6. Large subunit Hexs-B catalyzes the condensation reaction and the final product chain length is cooperatively regulated by both the Hexs-A and Hexs-B subunits using the whole size of the hydrophobic cleft as a ruler. This Micrococcus luteus (Micrococcus lysodeikticus) protein is Hexaprenyl-diphosphate synthase large subunit ((2E,6E)-farnesyl-diphosphate specific) (hexs-b).